Consider the following 344-residue polypeptide: tRNA N6-adenosine threonylcarbamoyltransferase (344 aa).

Fe cation is bound by residues His113 and His117. Substrate-binding positions include 135–139 (LVSGG), Asp169, Gly182, Asp186, and Asn278. Position 306 (Asp306) interacts with Fe cation. The interval 325–344 (ESPISVGTDPSLSVETPQVF) is disordered. The span at 326–344 (SPISVGTDPSLSVETPQVF) shows a compositional bias: polar residues.

The protein belongs to the KAE1 / TsaD family. Fe(2+) is required as a cofactor.

Its subcellular location is the cytoplasm. It carries out the reaction L-threonylcarbamoyladenylate + adenosine(37) in tRNA = N(6)-L-threonylcarbamoyladenosine(37) in tRNA + AMP + H(+). Required for the formation of a threonylcarbamoyl group on adenosine at position 37 (t(6)A37) in tRNAs that read codons beginning with adenine. Is involved in the transfer of the threonylcarbamoyl moiety of threonylcarbamoyl-AMP (TC-AMP) to the N6 group of A37, together with TsaE and TsaB. TsaD likely plays a direct catalytic role in this reaction. This is tRNA N6-adenosine threonylcarbamoyltransferase from Corynebacterium glutamicum (strain R).